Here is a 142-residue protein sequence, read N- to C-terminus: Transcription antitermination protein NusB (142 aa).

It belongs to the NusB family.

In terms of biological role, involved in transcription antitermination. Required for transcription of ribosomal RNA (rRNA) genes. Binds specifically to the boxA antiterminator sequence of the ribosomal RNA (rrn) operons. The chain is Transcription antitermination protein NusB from Streptococcus uberis (strain ATCC BAA-854 / 0140J).